The sequence spans 174 residues: Peptide methionine sulfoxide reductase MsrA (174 aa).

Residue Cys10 is part of the active site.

The protein belongs to the MsrA Met sulfoxide reductase family.

The catalysed reaction is L-methionyl-[protein] + [thioredoxin]-disulfide + H2O = L-methionyl-(S)-S-oxide-[protein] + [thioredoxin]-dithiol. It carries out the reaction [thioredoxin]-disulfide + L-methionine + H2O = L-methionine (S)-S-oxide + [thioredoxin]-dithiol. Functionally, has an important function as a repair enzyme for proteins that have been inactivated by oxidation. Catalyzes the reversible oxidation-reduction of methionine sulfoxide in proteins to methionine. This is Peptide methionine sulfoxide reductase MsrA from Pseudarthrobacter chlorophenolicus (strain ATCC 700700 / DSM 12829 / CIP 107037 / JCM 12360 / KCTC 9906 / NCIMB 13794 / A6) (Arthrobacter chlorophenolicus).